A 421-amino-acid polypeptide reads, in one-letter code: UDP-N-acetylglucosamine 1-carboxyvinyltransferase (421 aa).

Phosphoenolpyruvate is bound at residue 22–23 (KN). R95 is a binding site for UDP-N-acetyl-alpha-D-glucosamine. C119 functions as the Proton donor in the catalytic mechanism. 2-(S-cysteinyl)pyruvic acid O-phosphothioketal is present on C119. UDP-N-acetyl-alpha-D-glucosamine-binding positions include 124 to 128 (RPVDQ), D309, and I331.

This sequence belongs to the EPSP synthase family. MurA subfamily.

The protein resides in the cytoplasm. The enzyme catalyses phosphoenolpyruvate + UDP-N-acetyl-alpha-D-glucosamine = UDP-N-acetyl-3-O-(1-carboxyvinyl)-alpha-D-glucosamine + phosphate. The protein operates within cell wall biogenesis; peptidoglycan biosynthesis. Functionally, cell wall formation. Adds enolpyruvyl to UDP-N-acetylglucosamine. This chain is UDP-N-acetylglucosamine 1-carboxyvinyltransferase, found in Leptothrix cholodnii (strain ATCC 51168 / LMG 8142 / SP-6) (Leptothrix discophora (strain SP-6)).